We begin with the raw amino-acid sequence, 468 residues long: Argininosuccinate lyase (468 aa).

Belongs to the lyase 1 family. Argininosuccinate lyase subfamily.

It localises to the cytoplasm. It catalyses the reaction 2-(N(omega)-L-arginino)succinate = fumarate + L-arginine. It participates in amino-acid biosynthesis; L-arginine biosynthesis; L-arginine from L-ornithine and carbamoyl phosphate: step 3/3. This chain is Argininosuccinate lyase, found in Alkalilimnicola ehrlichii (strain ATCC BAA-1101 / DSM 17681 / MLHE-1).